The chain runs to 95 residues: uncharacterized protein (95 aa).

Positions 1 to 12 (MQNFMNNLSGGS) are enriched in low complexity. Positions 1–27 (MQNFMNNLSGGSNKEGGEKSNDFLSSA) are disordered.

This is an uncharacterized protein from Schizosaccharomyces pombe (strain 972 / ATCC 24843) (Fission yeast).